A 343-amino-acid polypeptide reads, in one-letter code: Heat-inducible transcription repressor HrcA (343 aa).

This sequence belongs to the HrcA family.

Its function is as follows. Negative regulator of class I heat shock genes (grpE-dnaK-dnaJ and groELS operons). Prevents heat-shock induction of these operons. The sequence is that of Heat-inducible transcription repressor HrcA from Mycobacterium tuberculosis (strain ATCC 25177 / H37Ra).